Reading from the N-terminus, the 199-residue chain is Chaperone protein TorD (199 aa).

It belongs to the TorD/DmsD family. TorD subfamily.

The protein localises to the cytoplasm. Functionally, involved in the biogenesis of TorA. Acts on TorA before the insertion of the molybdenum cofactor and, as a result, probably favors a conformation of the apoenzyme that is competent for acquiring the cofactor. The polypeptide is Chaperone protein TorD (Shigella boydii serotype 18 (strain CDC 3083-94 / BS512)).